The following is a 426-amino-acid chain: MSKSENLYHAARELIPGGVNSPVRAFTGVGGTPLFIERADGAYLYDVDGKAYIDYVGSWGPMVLGHNHPAIRNAVIEAASRGLSFGAPTEMEVKMAALVTELVPTMDMVRMVNSGTEATMSAIRLARGFTGRDKIIKFEGCYHGHADCLLVKAGSGALTLGQPNSPGVPADFAKHTLTCTYNDLASVRAAFEQYPQEIACIIVEPVAGNMNCIPPQPEFLPGLRALCDEFGALLIIDEVMTGFRVALAGAQAYYGVEPDLTCLGKIIGGGMPVGAFGGRREVMDALAPTGPVYQAGTLSGNPIAMAAGFACLNEVAQPGVHETLTELTNQLAQGLLDAARDAGIPLVVNNVGGMFGIFFTDAETVTCYQDVVKCDVERFKRFFHLMLEEGVYLAPSAFEAGFMSVAHSEEDIDNTIDAARRVFAKL.

Residue K265 is modified to N6-(pyridoxal phosphate)lysine.

It belongs to the class-III pyridoxal-phosphate-dependent aminotransferase family. HemL subfamily. Homodimer. Pyridoxal 5'-phosphate is required as a cofactor.

Its subcellular location is the cytoplasm. It carries out the reaction (S)-4-amino-5-oxopentanoate = 5-aminolevulinate. Its pathway is porphyrin-containing compound metabolism; protoporphyrin-IX biosynthesis; 5-aminolevulinate from L-glutamyl-tRNA(Glu): step 2/2. This chain is Glutamate-1-semialdehyde 2,1-aminomutase, found in Klebsiella pneumoniae subsp. pneumoniae (strain ATCC 700721 / MGH 78578).